The primary structure comprises 82 residues: Large ribosomal subunit protein bL31B (82 aa).

This sequence belongs to the bacterial ribosomal protein bL31 family. Type B subfamily. In terms of assembly, part of the 50S ribosomal subunit.

This chain is Large ribosomal subunit protein bL31B, found in Pectobacterium atrosepticum (strain SCRI 1043 / ATCC BAA-672) (Erwinia carotovora subsp. atroseptica).